Consider the following 249-residue polypeptide: Glucosamine-6-phosphate deaminase 2 (249 aa).

The Proton acceptor; for enolization step role is filled by aspartate 67. Catalysis depends on asparagine 136, which acts as the For ring-opening step. The active-site Proton acceptor; for ring-opening step is histidine 138. The active-site For ring-opening step is the glutamate 143.

It belongs to the glucosamine/galactosamine-6-phosphate isomerase family. NagB subfamily.

The enzyme catalyses alpha-D-glucosamine 6-phosphate + H2O = beta-D-fructose 6-phosphate + NH4(+). The protein operates within amino-sugar metabolism; N-acetylneuraminate degradation; D-fructose 6-phosphate from N-acetylneuraminate: step 5/5. Functionally, catalyzes the reversible isomerization-deamination of glucosamine 6-phosphate (GlcN6P) to form fructose 6-phosphate (Fru6P) and ammonium ion. Required for growth on glucosamine and also provides the majority of GlcN6P deaminase activity during growth on N-acetylglucosamine (GlcNAc). This Bacillus subtilis (strain 168) protein is Glucosamine-6-phosphate deaminase 2.